Consider the following 902-residue polypeptide: MSQSSKARLSTDPTVFEAVLNNHTPMMQQYLRIKAQHPDMLMFYRMGDFYELFFDDAEKAAKLLDITLTRRGTSAGEPIKMAGVPYHAAEQYLAKLVKLGESVVICEQVGDPATSKGPVERQVTRIITPGTLTDAALLEDKRDSALLALLVHESTLGLAWLNLAAGQFSVMETSVNNLTAELERLKPAEILLPESLNLAGINDRVIQEKLCVKHLPAWQFDTAAAVRNLSRQFGTHDLSGFGCEDLDVSLGAASALLDYTRLTQGASIGHIKGLRVEREDTYLRMDATTRRNLEISETIRGDAAPTLLSLLDTCSTNMGSRLLCHWLHHPLRDRGLIQNRLNGVSFLMGEAGSGPCLSVRDCLKRVTDIERITARIALKSARPRDLSGLRDSLKRLPAVNNAVAGTATTSSGGSDVSAHVAALIHSMAPDNALVALLEKSLKEEPEVMLRTGGVIADGYDAELDELRAIHNNCDEFLLQLETREKARTGIANLKVEYNRLHGFYIEVTHAHTEKIPDDYRRRQTLKNAERYITPELKAFEEKALSAQSRALEREKLLYGELLDMLSQYIDHLQQVARSVAELDVLATFAERALALDYSLPLFTSDSVIEIQAGRHPVVEKQVDSFIANDVQLGARTGGRRQMLVITGPNMGGKSTYMRQVALIALLAHCGSFVPARSALIGPLDQLFTRIGASDDLAGGRSTFMMEMTEAANILHNATAQSLVLMDEVGRGTSTFDGLALAFAIARYLLEKNRSYTLFATHYFELTRLAEEFAQVANVHLRAVEHKHHIVFLHAVNEGPASQSYGLQVAALAGVPDPVIRTARRYLLKLEQEALSNQPQGDLFSRDDLFWKQDRMPEGSVDKNDSAPEHPVLALLRTIVPDDLSPKQALEQLYGLKKAAEKE.

Position 647-654 (647-654 (GPNMGGKS)) interacts with ATP.

This sequence belongs to the DNA mismatch repair MutS family.

In terms of biological role, this protein is involved in the repair of mismatches in DNA. It is possible that it carries out the mismatch recognition step. This protein has a weak ATPase activity. This is DNA mismatch repair protein MutS from Nitrosospira multiformis (strain ATCC 25196 / NCIMB 11849 / C 71).